A 232-amino-acid polypeptide reads, in one-letter code: Large ribosomal subunit protein uL1 (232 aa).

This sequence belongs to the universal ribosomal protein uL1 family. In terms of assembly, part of the 50S ribosomal subunit.

Its function is as follows. Binds directly to 23S rRNA. The L1 stalk is quite mobile in the ribosome, and is involved in E site tRNA release. Protein L1 is also a translational repressor protein, it controls the translation of the L11 operon by binding to its mRNA. The polypeptide is Large ribosomal subunit protein uL1 (Cereibacter sphaeroides (strain ATCC 17025 / ATH 2.4.3) (Rhodobacter sphaeroides)).